An 824-amino-acid polypeptide reads, in one-letter code: RelA-associated inhibitor (824 aa).

Met-1 is subject to N-acetylmethionine. Disordered stretches follow at residues 48-87 (SLWS…SPQK) and 99-271 (RSES…YERL). Residues Ser-84, Ser-100, Ser-102, Ser-110, Ser-113, Ser-119, and Ser-120 each carry the phosphoserine modification. Thr-123 bears the Phosphothreonine mark. Ser-134 is modified (phosphoserine). An omega-N-methylarginine mark is found at Arg-137, Arg-142, Arg-144, Arg-160, Arg-167, and Arg-180. 3 positions are modified to phosphoserine: Ser-183, Ser-187, and Ser-203. Arg-205 is modified (omega-N-methylarginine). Thr-275 is subject to Phosphothreonine. Ser-279 carries the phosphoserine modification. Disordered stretches follow at residues 291-370 (SLDG…RPIP) and 388-501 (RAVL…QTVP). Position 307 is a phosphothreonine (Thr-307). Residues Ser-315, Ser-331, and Ser-338 each carry the phosphoserine modification. Thr-340 carries the post-translational modification Phosphothreonine. Positions 359-370 (QPRSTPRQRPIP) are enriched in low complexity. Pro residues predominate over residues 400–424 (APPPKLPPQPPPQPQMQPQPQPQPQ). Residues 425 to 440 (MQPQSQAQPQTPAPQQ) show a composition bias toward low complexity. Phosphoserine is present on residues Ser-522, Ser-563, and Ser-593. Residues 547–614 (FHRHGGPGPG…SVLRKVGSPR (68 aa)) form a disordered region. Residues 575-597 (PPAPAPPAPIPPPAPPQSSPPEQ) show a composition bias toward pro residues. ANK repeat units lie at residues 655-684 (EGIT…NVNS) and 688-717 (HGWT…AIFA). Positions 754 to 816 (MHNGVVYALW…PRNYFGLFPR (63 aa)) constitute an SH3 domain.

This sequence belongs to the iASPP family. In terms of assembly, interacts with TP63 and TP73. Interacts with RELA NF-kappa-B subunit and with SP1 via its C-terminal part. Interacts (via SH3 domain and ANK repeats) with p53/TP53; the interaction inhibits pro-apoptotic activity of p53/TP53. In terms of tissue distribution, most abundant in skin with high levels also found in heart, testis and stomach. In 15.5 dpc embryonic heart, expressed at higher levels in atria than ventricles.

Its subcellular location is the cytoplasm. The protein resides in the nucleus. In terms of biological role, regulator that plays a central role in regulation of apoptosis and transcription via its interaction with NF-kappa-B and p53/TP53 proteins. Inhibits p53/TP53 function, possibly by preventing the association between p53/TP53 and ASPP1 or ASPP2, and therefore suppressing the subsequent activation of apoptosis. Is involved in NF-kappa-B dependent negative regulation of inflammatory response. The protein is RelA-associated inhibitor of Mus musculus (Mouse).